Consider the following 109-residue polypeptide: N-cym protein (109 aa).

In terms of assembly, interacts with MYCN and GSK3B. As to expression, expressed in the neuronal cells of the cerebrum and cerebellum, spermatocytes of the testis, pancreatic cells and also the heart. Expressed in both primary and metastatic neuroblastomas and in thyroid tumors (at protein level). Expression is associated with poor prognosis in neuroblastoma. Expressed in the fetal brain, lung, liver and kidney at varying low levels.

Its subcellular location is the cytoplasm. The protein localises to the nucleus. Functionally, regulates stability of MYCN in neuroblastoma cells by inhibiting GSK3B-mediated MYCN phosphorylation. Inhibits GSK3B activity by promoting its phosphorylation at 'Ser-9'. The polypeptide is N-cym protein (MYCNOS) (Homo sapiens (Human)).